The chain runs to 192 residues: dITP/XTP pyrophosphatase (192 aa).

T12 to K17 lines the substrate pocket. The Mg(2+) site is built by E41 and D70. Catalysis depends on D70, which acts as the Proton acceptor. Substrate is bound by residues S71, F145 to D148, K168, and H173 to R174.

It belongs to the HAM1 NTPase family. As to quaternary structure, homodimer. Mg(2+) serves as cofactor.

The catalysed reaction is XTP + H2O = XMP + diphosphate + H(+). It carries out the reaction dITP + H2O = dIMP + diphosphate + H(+). The enzyme catalyses ITP + H2O = IMP + diphosphate + H(+). In terms of biological role, pyrophosphatase that catalyzes the hydrolysis of nucleoside triphosphates to their monophosphate derivatives, with a high preference for the non-canonical purine nucleotides XTP (xanthosine triphosphate), dITP (deoxyinosine triphosphate) and ITP. Seems to function as a house-cleaning enzyme that removes non-canonical purine nucleotides from the nucleotide pool, thus preventing their incorporation into DNA/RNA and avoiding chromosomal lesions. The protein is dITP/XTP pyrophosphatase of Saccharolobus solfataricus (strain ATCC 35092 / DSM 1617 / JCM 11322 / P2) (Sulfolobus solfataricus).